Reading from the N-terminus, the 308-residue chain is Nuclear transcription factor Y subunit A-5 (308 aa).

The span at 1–10 shows a compositional bias: basic and acidic residues; sequence MQVFQRKEDS. 2 disordered regions span residues 1–26 and 49–71; these read MQVF…IQGS and GLQL…GGGE. The segment covering 11–26 has biased composition (polar residues); sequence SWGNSMPTTNSNIQGS. Positions 181-204 match the Subunit association domain (SAD) motif; sequence FVNAKQYHAILRRRKHRAKLEAQN. Positions 211–236 form a DNA-binding region, NFYA/HAP2-type; that stretch reads KPYLHESRHLHALKRARGSGGRFLNT. The tract at residues 251–273 is disordered; it reads MANGQNFSMSPHGGGSGIGSSSI.

This sequence belongs to the NFYA/HAP2 subunit family. As to quaternary structure, heterotrimeric transcription factor composed of three components, NF-YA, NF-YB and NF-YC. NF-YB and NF-YC must interact and dimerize for NF-YA association and DNA binding. As to expression, expressed in the whole plant, except roots. Present in etiolated seedlings.

Its subcellular location is the nucleus. In terms of biological role, stimulates the transcription of various genes by recognizing and binding to a CCAAT motif in promoters. Involved in the blue light (BL) and abscisic acid (ABA) signaling pathways. This is Nuclear transcription factor Y subunit A-5 (NFYA5) from Arabidopsis thaliana (Mouse-ear cress).